A 621-amino-acid chain; its full sequence is Chaperone protein HtpG (621 aa).

The a; substrate-binding stretch occupies residues 1-328; that stretch reads MKQEKKKFDA…SEDLPLNISR (328 aa). The interval 329–544 is b; that stretch reads ESLQHNNVLE…EAAMDIRMER (216 aa). The segment at 478 to 498 is disordered; it reads DVDQATSSSEEKNKDDKKSDD. Basic and acidic residues predominate over residues 486-498; the sequence is SEEKNKDDKKSDD. Residues 545–621 are c; the sequence is FLIEQKQIAN…LNDIVQKAIL (77 aa).

This sequence belongs to the heat shock protein 90 family. In terms of assembly, homodimer.

It is found in the cytoplasm. Functionally, molecular chaperone. Has ATPase activity. This is Chaperone protein HtpG from Rickettsia bellii (strain RML369-C).